Consider the following 83-residue polypeptide: Toxin CjTL8 (83 aa).

The first 20 residues, 1-20 (MSSAIKILALLMVLVALAQA), serve as a signal peptide directing secretion. A propeptide spanning residues 21–44 (KPRKDYRAYPDFDDKSVILEDDKR) is cleaved from the precursor. Phe-81 is subject to Phenylalanine amide.

Contains 3 disulfide bonds.

It is found in the secreted. The protein resides in the nematocyst. Functionally, in vivo, induces immediate paralysis on shrimps (C.multidentata), followed by death when high doses are injected. No activity is observed when injected into fly larvae (M.domestica). This chain is Toxin CjTL8, found in Epiactis japonica (Sea anemone).